The following is a 339-amino-acid chain: Ectoine/5-hydroxyectoine-binding periplasmic protein UehA (339 aa).

Positions 1–20 (MAQSITFTFGAVAAAGIALA) are cleaved as a signal peptide. 5 residues coordinate L-ectoine: E36, R171, N211, F215, and F236. An intrachain disulfide couples C162 to C303.

Belongs to the bacterial solute-binding protein 7 family. As to quaternary structure, monomer. The complex comprises the extracytoplasmic solute receptor protein UehA, and the two transmembrane proteins UehB and UehC.

The protein resides in the periplasm. Part of the tripartite ATP-independent periplasmic (TRAP) transport system UehABC, which imports both ectoine and 5-hydroxyectoine as nutrients, and not as osmoprotectants. UehA binds both ectoine and 5-hydroxyectoine with high specificity and affinity. The polypeptide is Ectoine/5-hydroxyectoine-binding periplasmic protein UehA (Ruegeria pomeroyi (strain ATCC 700808 / DSM 15171 / DSS-3) (Silicibacter pomeroyi)).